The following is a 394-amino-acid chain: MSKEKFERTKPHVNVGTIGHVDHGKTTLTAAITTVLAKTYGGAARAFNQIDNAPEEKARGITINTSHVEYDTPTRHYAHVDCPGHADYVKNMITGAAQMDGAILVVAATDGPMPQTREHILLGRQVGVPYIIVFLNKCDMVDDEELLELVEMEVRELLSQYDFPGDDTPIVRGSALKALEGDAEWEAKILELAGFLDSYIPEPERAIDKPFLLPIEDVFSISGRGTVVTGRVERGIIKVGEEVEIVGIKETQKSTCTGVEMFRKLLDEGRAGENVGVLLRGIKREEIERGQVLAKPGTIKPHTKFESEVYILSKDEGGRHTPFFKGYRPQFYFRTTDVTGTIELPEGVEMVMPGDNIKMVVTLIHPIAMDDGLRFAIREGGRTVGAGVVAKVLS.

The tr-type G domain occupies 10–204 (KPHVNVGTIG…FLDSYIPEPE (195 aa)). The G1 stretch occupies residues 19–26 (GHVDHGKT). 19-26 (GHVDHGKT) contributes to the GTP binding site. Position 26 (threonine 26) interacts with Mg(2+). A G2 region spans residues 60–64 (GITIN). A G3 region spans residues 81–84 (DCPG). GTP contacts are provided by residues 81–85 (DCPGH) and 136–139 (NKCD). The G4 stretch occupies residues 136–139 (NKCD). The interval 174 to 176 (SAL) is G5.

This sequence belongs to the TRAFAC class translation factor GTPase superfamily. Classic translation factor GTPase family. EF-Tu/EF-1A subfamily. Monomer.

It localises to the cytoplasm. The catalysed reaction is GTP + H2O = GDP + phosphate + H(+). Functionally, GTP hydrolase that promotes the GTP-dependent binding of aminoacyl-tRNA to the A-site of ribosomes during protein biosynthesis. This Escherichia coli O139:H28 (strain E24377A / ETEC) protein is Elongation factor Tu 2.